Reading from the N-terminus, the 641-residue chain is 1-deoxy-D-xylulose-5-phosphate synthase (641 aa).

Residues histidine 71 and 112 to 114 each bind thiamine diphosphate; that span reads SHA. Aspartate 144 lines the Mg(2+) pocket. Residues 145–146, asparagine 174, tyrosine 285, and glutamate 366 each bind thiamine diphosphate; that span reads GA. Residue asparagine 174 coordinates Mg(2+).

This sequence belongs to the transketolase family. DXPS subfamily. Homodimer. The cofactor is Mg(2+). Thiamine diphosphate is required as a cofactor.

The enzyme catalyses D-glyceraldehyde 3-phosphate + pyruvate + H(+) = 1-deoxy-D-xylulose 5-phosphate + CO2. It functions in the pathway metabolic intermediate biosynthesis; 1-deoxy-D-xylulose 5-phosphate biosynthesis; 1-deoxy-D-xylulose 5-phosphate from D-glyceraldehyde 3-phosphate and pyruvate: step 1/1. Its function is as follows. Catalyzes the acyloin condensation reaction between C atoms 2 and 3 of pyruvate and glyceraldehyde 3-phosphate to yield 1-deoxy-D-xylulose-5-phosphate (DXP). This chain is 1-deoxy-D-xylulose-5-phosphate synthase, found in Mycobacteroides abscessus (strain ATCC 19977 / DSM 44196 / CCUG 20993 / CIP 104536 / JCM 13569 / NCTC 13031 / TMC 1543 / L948) (Mycobacterium abscessus).